A 179-amino-acid polypeptide reads, in one-letter code: MSRIGKAEIKLPDKVEVKQENANIKVKGPLGELSTPIFEGLSVKNENGIVKLERSNEDQKVVALHGLTRALLMNCVKGVSQGWEKNLEINGVGYRAQKRGEDLVMSLGYSHEVVYKAPKGIKIDVQEQLKIKVTGIDKQLVGQVAADIRSKRPPEPYKGKGIKYAEEFIKKKAGKTGKK.

Belongs to the universal ribosomal protein uL6 family. Part of the 50S ribosomal subunit.

Functionally, this protein binds to the 23S rRNA, and is important in its secondary structure. It is located near the subunit interface in the base of the L7/L12 stalk, and near the tRNA binding site of the peptidyltransferase center. This chain is Large ribosomal subunit protein uL6, found in Leptospira borgpetersenii serovar Hardjo-bovis (strain JB197).